The primary structure comprises 184 residues: ATP synthase subunit b, chloroplastic (184 aa).

Residues Leu27–Leu49 traverse the membrane as a helical segment.

This sequence belongs to the ATPase B chain family. F-type ATPases have 2 components, F(1) - the catalytic core - and F(0) - the membrane proton channel. F(1) has five subunits: alpha(3), beta(3), gamma(1), delta(1), epsilon(1). F(0) has four main subunits: a(1), b(1), b'(1) and c(10-14). The alpha and beta chains form an alternating ring which encloses part of the gamma chain. F(1) is attached to F(0) by a central stalk formed by the gamma and epsilon chains, while a peripheral stalk is formed by the delta, b and b' chains.

It localises to the plastid. The protein localises to the chloroplast thylakoid membrane. F(1)F(0) ATP synthase produces ATP from ADP in the presence of a proton or sodium gradient. F-type ATPases consist of two structural domains, F(1) containing the extramembraneous catalytic core and F(0) containing the membrane proton channel, linked together by a central stalk and a peripheral stalk. During catalysis, ATP synthesis in the catalytic domain of F(1) is coupled via a rotary mechanism of the central stalk subunits to proton translocation. In terms of biological role, component of the F(0) channel, it forms part of the peripheral stalk, linking F(1) to F(0). The polypeptide is ATP synthase subunit b, chloroplastic (Olimarabidopsis pumila (Dwarf rocket)).